Here is a 403-residue protein sequence, read N- to C-terminus: F-box only protein 22 (403 aa).

At methionine 1 the chain carries N-acetylmethionine. One can recognise an F-box domain in the interval 21 to 67 (FVLSNLAEVVERVLTFLPAKALLRVACVCRLWRECVRRVLRTHRSVT). A Phosphothreonine modification is found at threonine 127. The residue at position 128 (serine 128) is a Phosphoserine. Lysine 194 carries the post-translational modification N6-acetyllysine.

As to quaternary structure, directly interacts with SKP1 and CUL1. Interacts (via C-terminal) with KDM4A. Interacts with TP53. Interacts with MTOR; this interaction promotes 'lys-27'-linked ubiquitination of MTOR. In terms of assembly, (Microbial infection) Interacts with SARS_COV-2 protein NSP5; this interaction attenuates NSP5-mediated inhibition of innate immunity. Phosphorylated by EIF2AK4 at Thr-127 causes cytoplasmic retention of FBXO22. In terms of tissue distribution, predominantly expressed in liver, also enriched in cardiac muscle.

The protein resides in the cytoplasm. It is found in the nucleus. It localises to the myofibril. Its subcellular location is the sarcomere. The protein localises to the z line. In terms of biological role, substrate-recognition component of the SCF (SKP1-CUL1-F-box protein)-type E3 ubiquitin ligase complex that is implicated in the control of various cellular processes such as cell cycle control, transcriptional regulation, DNA damage repair, and apoptosis. Promotes the proteasome-dependent degradation of key sarcomeric proteins, such as alpha-actinin (ACTN2) and filamin-C (FLNC), essential for maintenance of normal contractile function. Acts as a key regulator of histone methylation marks namely H3K9 and H3K36 methylation through the regulation of histone demethylase KDM4A protein levels. In complex with KDM4A, also regulates the abundance of TP53 by targeting methylated TP53 for degradation at the late senescent stage. Under oxidative stress, promotes the ubiquitination and degradation of BACH1. Mechanistically, reactive oxygen species (ROS) covalently modify cysteine residues on the bZIP domain of BACH1, leading to its release from chromatin and making it accessible to FBXO22. Upon amino acid depletion, mediates 'Lys-27'-linked ubiquitination of MTOR and thereby inhibits substrate recruitment to mTORC1. Also inhibits SARS-CoV-2 replication by inducing NSP5 degradation. The polypeptide is F-box only protein 22 (FBXO22) (Homo sapiens (Human)).